Consider the following 174-residue polypeptide: Protein CURVATURE THYLAKOID 1B, chloroplastic (174 aa).

Residues 1-20 (MASLSVSSSSTIIDSRAPPS) form a disordered region. Residues 1-63 (MASLSVSSSS…RKIVRNVVTR (63 aa)) constitute a chloroplast transit peptide. The residue at position 64 (alanine 64) is an N-acetylalanine. Residues 64–100 (ATTEVGEAPATTTEAETTELPEIVKTAQEAWEKVDDK) are Stromal-facing. A helical transmembrane segment spans residues 101-121 (YAIGSLAFAGVVALWGSAGMI). The Lumenal portion of the chain corresponds to 122 to 126 (SAIDR). Residues 127–147 (LPLVPGVLELVGIGYTGWFTY) traverse the membrane as a helical segment. Residues 148-174 (KNLVFKPDREALFEKVKSTYKDILGSS) are Stromal-facing.

It belongs to the CURT family. Homo- and heterodimers and trimers. Interacts with PSAL. In terms of processing, phosphorylated on either Thr-65 or Thr-66 by a threonine specific thylakoid kinase.

The protein resides in the plastid. Its subcellular location is the chloroplast thylakoid membrane. Determines thylakoid architecture by inducing membrane curvature. This is Protein CURVATURE THYLAKOID 1B, chloroplastic (CURT1B) from Arabidopsis thaliana (Mouse-ear cress).